A 765-amino-acid polypeptide reads, in one-letter code: uncharacterized protein (765 aa).

Disordered regions lie at residues 9–61, 128–164, 265–289, 301–373, 409–526, 540–560, and 668–765; these read NDGN…PSSV, QQQQ…NYTS, TTSS…NITT, WTTT…TYIQ, IGNN…NQSN, PTKK…KYSE, and NSNT…KSRI. Low complexity-rich tracts occupy residues 40–61 and 143–161; these read SNNI…PSSV and SNKS…NNNN. 7 stretches are compositionally biased toward low complexity: residues 301–311, 325–344, 353–373, 414–428, 438–485, 495–504, and 513–526; these read WTTTKPTSSTK, YDSP…STSS, IQPT…TYIQ, SNHT…SLST, NNNN…INNN, DNQSSYSSPD, and SQQQ…NQSN. Over residues 668–745 the composition is skewed to low complexity; sequence NSNTDNYNYY…NNSRNNYNNN (78 aa).

This is an uncharacterized protein from Dictyostelium discoideum (Social amoeba).